A 586-amino-acid polypeptide reads, in one-letter code: CTP synthase (586 aa).

The interval 1–265 (MVRFIFVTGG…ENKVLNFFNI (265 aa)) is amidoligase domain. Ser-13 provides a ligand contact to CTP. Ser-13 contacts UTP. Residues 14–19 (SLGKGI) and Asp-71 each bind ATP. The Mg(2+) site is built by Asp-71 and Glu-139. CTP contacts are provided by residues 146–148 (DIE), 186–191 (KTKPTQ), and Lys-222. UTP is bound by residues 186-191 (KTKPTQ) and Lys-222. A Glutamine amidotransferase type-1 domain is found at 290–582 (KIAIITKYHK…IKATIEYNKS (293 aa)). Gly-352 is an L-glutamine binding site. The Nucleophile; for glutamine hydrolysis role is filled by Cys-379. L-glutamine is bound by residues 380–383 (FGMQ) and Glu-403. The RPE1 insert domain occupies 429 to 473 (AHISKCTYSEAFECDASTVYTNIHEDSNNLSTDKLQIETNFRNMS). Position 510 (Arg-510) interacts with L-glutamine. Active-site residues include His-555 and Glu-557.

This sequence belongs to the CTP synthase family. As to quaternary structure, homotetramer.

The catalysed reaction is UTP + L-glutamine + ATP + H2O = CTP + L-glutamate + ADP + phosphate + 2 H(+). It carries out the reaction L-glutamine + H2O = L-glutamate + NH4(+). The enzyme catalyses UTP + NH4(+) + ATP = CTP + ADP + phosphate + 2 H(+). It participates in pyrimidine metabolism; CTP biosynthesis via de novo pathway; CTP from UDP: step 2/2. With respect to regulation, allosterically activated by GTP, when glutamine is the substrate; GTP has no effect on the reaction when ammonia is the substrate. The allosteric effector GTP functions by stabilizing the protein conformation that binds the tetrahedral intermediate(s) formed during glutamine hydrolysis. Inhibited by the product CTP, via allosteric rather than competitive inhibition. Functionally, catalyzes the ATP-dependent amination of UTP to CTP with either L-glutamine or ammonia as the source of nitrogen. Regulates intracellular CTP levels through interactions with the four ribonucleotide triphosphates. This is CTP synthase from Rickettsia prowazekii (strain Madrid E).